A 99-amino-acid polypeptide reads, in one-letter code: NADH-quinone oxidoreductase subunit K (99 aa).

Helical transmembrane passes span 3 to 23, 28 to 48, and 62 to 82; these read PENY…GVLL, IVVF…FVTF, and FFTM…IMII.

Belongs to the complex I subunit 4L family. In terms of assembly, NDH-1 is composed of 14 different subunits. Subunits NuoA, H, J, K, L, M, N constitute the membrane sector of the complex.

The protein localises to the cell membrane. The enzyme catalyses a quinone + NADH + 5 H(+)(in) = a quinol + NAD(+) + 4 H(+)(out). Functionally, NDH-1 shuttles electrons from NADH, via FMN and iron-sulfur (Fe-S) centers, to quinones in the respiratory chain. The immediate electron acceptor for the enzyme in this species is believed to be a menaquinone. Couples the redox reaction to proton translocation (for every two electrons transferred, four hydrogen ions are translocated across the cytoplasmic membrane), and thus conserves the redox energy in a proton gradient. The sequence is that of NADH-quinone oxidoreductase subunit K from Rhodococcus erythropolis (strain PR4 / NBRC 100887).